A 238-amino-acid polypeptide reads, in one-letter code: 1-(5-phosphoribosyl)-5-[(5-phosphoribosylamino)methylideneamino] imidazole-4-carboxamide isomerase (238 aa).

Asp8 (proton acceptor) is an active-site residue. The active-site Proton donor is the Asp129.

This sequence belongs to the HisA/HisF family.

The protein localises to the cytoplasm. The catalysed reaction is 1-(5-phospho-beta-D-ribosyl)-5-[(5-phospho-beta-D-ribosylamino)methylideneamino]imidazole-4-carboxamide = 5-[(5-phospho-1-deoxy-D-ribulos-1-ylimino)methylamino]-1-(5-phospho-beta-D-ribosyl)imidazole-4-carboxamide. The protein operates within amino-acid biosynthesis; L-histidine biosynthesis; L-histidine from 5-phospho-alpha-D-ribose 1-diphosphate: step 4/9. This chain is 1-(5-phosphoribosyl)-5-[(5-phosphoribosylamino)methylideneamino] imidazole-4-carboxamide isomerase, found in Anaeromyxobacter sp. (strain Fw109-5).